Here is a 131-residue protein sequence, read N- to C-terminus: Small ribosomal subunit protein uS8 (131 aa).

It belongs to the universal ribosomal protein uS8 family. As to quaternary structure, part of the 30S ribosomal subunit. Contacts proteins S5 and S12.

In terms of biological role, one of the primary rRNA binding proteins, it binds directly to 16S rRNA central domain where it helps coordinate assembly of the platform of the 30S subunit. The polypeptide is Small ribosomal subunit protein uS8 (Ruthia magnifica subsp. Calyptogena magnifica).